A 982-amino-acid polypeptide reads, in one-letter code: Glycine dehydrogenase (decarboxylating) (982 aa).

N6-(pyridoxal phosphate)lysine is present on lysine 729.

It belongs to the GcvP family. In terms of assembly, the glycine cleavage system is composed of four proteins: P, T, L and H. Pyridoxal 5'-phosphate is required as a cofactor.

It catalyses the reaction N(6)-[(R)-lipoyl]-L-lysyl-[glycine-cleavage complex H protein] + glycine + H(+) = N(6)-[(R)-S(8)-aminomethyldihydrolipoyl]-L-lysyl-[glycine-cleavage complex H protein] + CO2. Its function is as follows. The glycine cleavage system catalyzes the degradation of glycine. The P protein binds the alpha-amino group of glycine through its pyridoxal phosphate cofactor; CO(2) is released and the remaining methylamine moiety is then transferred to the lipoamide cofactor of the H protein. The protein is Glycine dehydrogenase (decarboxylating) of Ralstonia nicotianae (strain ATCC BAA-1114 / GMI1000) (Ralstonia solanacearum).